The following is a 73-amino-acid chain: MKSEIKKNDMVKVIAGDDKGKVAKVLAVLPKTSQVVVEGCKVVKKAIKPTDDNPKGGFIHKEKPMHISNVKKA.

A compositionally biased stretch (basic and acidic residues) spans 51–65 (DDNPKGGFIHKEKPM). Positions 51–73 (DDNPKGGFIHKEKPMHISNVKKA) are disordered.

Belongs to the universal ribosomal protein uL24 family. Part of the 50S ribosomal subunit.

Its function is as follows. One of two assembly initiator proteins, it binds directly to the 5'-end of the 23S rRNA, where it nucleates assembly of the 50S subunit. One of the proteins that surrounds the polypeptide exit tunnel on the outside of the subunit. The polypeptide is Large ribosomal subunit protein uL24 (Helicobacter pylori (strain Shi470)).